The primary structure comprises 501 residues: Spore development regulator VOSA (501 aa).

Disordered stretches follow at residues 26–55 (GQFG…GQEP), 67–88 (PQRA…IDPP), and 228–274 (AMTT…DTRG). Over residues 35–50 (PPQAETQMSAQASAQA) the composition is skewed to polar residues. One can recognise a Velvet domain in the interval 52–223 (GQEPEPDYKL…SDQGVRLRVR (172 aa)). 2 stretches are compositionally biased toward basic and acidic residues: residues 67 to 85 (PQRA…RKPI) and 237 to 252 (QHAE…DRKQ). Residues 253-271 (TSAVSRHSSINENDSTPTD) show a composition bias toward polar residues. The Nuclear localization signal signature appears at 364–371 (MSSHHGYT). Disordered stretches follow at residues 378 to 455 (FAPH…QQTP) and 474 to 501 (PGQL…EPGA).

It belongs to the velvet family. VosA subfamily. As to quaternary structure, forms a heterodimeric complex with VELB; the formation of the VELB-VOSA complex is light-dependent.

Its subcellular location is the nucleus. Functionally, component of the VELB-VOSA heterodimeric complex that plays a dual role in activating genes associated with spore maturation and repressing certain development-associated genes. The complex binds DNA through the DNA-binding domain of VOSA that recognizes an 11-nucleotide consensus sequence 5'-CTGGCCGCGGC-3' consisting of two motifs in the promoters of key developmental regulatory genes. Appears dispensable for the development and pathogenicity. This is Spore development regulator VOSA from Pyricularia oryzae (strain 70-15 / ATCC MYA-4617 / FGSC 8958) (Rice blast fungus).